Consider the following 72-residue polypeptide: Translation initiation factor IF-1 (72 aa).

Residues 1–72 (MAGNDVIEIE…TKGRITYRHK (72 aa)) enclose the S1-like domain.

The protein belongs to the IF-1 family. As to quaternary structure, component of the 30S ribosomal translation pre-initiation complex which assembles on the 30S ribosome in the order IF-2 and IF-3, IF-1 and N-formylmethionyl-tRNA(fMet); mRNA recruitment can occur at any time during PIC assembly.

It localises to the cytoplasm. Its function is as follows. One of the essential components for the initiation of protein synthesis. Stabilizes the binding of IF-2 and IF-3 on the 30S subunit to which N-formylmethionyl-tRNA(fMet) subsequently binds. Helps modulate mRNA selection, yielding the 30S pre-initiation complex (PIC). Upon addition of the 50S ribosomal subunit IF-1, IF-2 and IF-3 are released leaving the mature 70S translation initiation complex. The chain is Translation initiation factor IF-1 from Oenococcus oeni (strain ATCC BAA-331 / PSU-1).